We begin with the raw amino-acid sequence, 186 residues long: ATP synthase subunit delta (186 aa).

It belongs to the ATPase delta chain family. F-type ATPases have 2 components, F(1) - the catalytic core - and F(0) - the membrane proton channel. F(1) has five subunits: alpha(3), beta(3), gamma(1), delta(1), epsilon(1). CF(0) has four main subunits: a(1), b(1), b'(1) and c(10-14). The alpha and beta chains form an alternating ring which encloses part of the gamma chain. F(1) is attached to F(0) by a central stalk formed by the gamma and epsilon chains, while a peripheral stalk is formed by the delta, b and b' chains.

It localises to the cell inner membrane. Its function is as follows. F(1)F(0) ATP synthase produces ATP from ADP in the presence of a proton or sodium gradient. F-type ATPases consist of two structural domains, F(1) containing the extramembraneous catalytic core and F(0) containing the membrane proton channel, linked together by a central stalk and a peripheral stalk. During catalysis, ATP synthesis in the catalytic domain of F(1) is coupled via a rotary mechanism of the central stalk subunits to proton translocation. This protein is part of the stalk that links CF(0) to CF(1). It either transmits conformational changes from CF(0) to CF(1) or is implicated in proton conduction. This chain is ATP synthase subunit delta, found in Rhodopseudomonas palustris (strain ATCC BAA-98 / CGA009).